The primary structure comprises 223 residues: N-terminal Xaa-Pro-Lys N-methyltransferase 1 (223 aa).

Met1 carries the post-translational modification N-acetylmethionine. Thr2 is modified (N-acetylthreonine; in N-terminal Xaa-Pro-Lys N-methyltransferase 1, N-terminally processed). S-adenosyl-L-methionine is bound by residues Gly69, Arg74, 91–93 (DIT), 119–120 (LQ), and Gln135.

The protein belongs to the methyltransferase superfamily. NTM1 family.

The protein resides in the nucleus. It catalyses the reaction N-terminal L-alanyl-L-prolyl-L-lysyl-[protein] + 3 S-adenosyl-L-methionine = N-terminal N,N,N-trimethyl-L-alanyl-L-prolyl-L-lysyl-[protein] + 3 S-adenosyl-L-homocysteine + 3 H(+). The enzyme catalyses N-terminal L-seryl-L-prolyl-L-lysyl-[protein] + 3 S-adenosyl-L-methionine = N-terminal N,N,N-trimethyl-L-seryl-L-prolyl-L-lysyl-[protein] + 3 S-adenosyl-L-homocysteine + 3 H(+). It carries out the reaction N-terminal L-prolyl-L-prolyl-L-lysyl-[protein] + 2 S-adenosyl-L-methionine = N-terminal N,N-dimethyl-L-prolyl-L-prolyl-L-lysyl-[protein] + 2 S-adenosyl-L-homocysteine + 2 H(+). In terms of biological role, distributive alpha-N-methyltransferase that methylates the N-terminus of target proteins containing the N-terminal motif [Ala/Gly/Pro/Ser]-Pro-Lys when the initiator Met is cleaved. Specifically catalyzes mono-, di- or tri-methylation of the exposed alpha-amino group of the Ala, Gly or Ser residue in the [Ala/Gly/Ser]-Pro-Lys motif and mono- or di-methylation of Pro in the Pro-Pro-Lys motif. Some of the substrates may be primed by NTMT2-mediated monomethylation. Catalyzes the trimethylation of the N-terminal Gly in CENPA (after removal of Met-1). Responsible for the N-terminal methylation of KLHL31, MYL2, MYL3, RB1, RCC1, RPL23A and SET. Required during mitosis for normal bipolar spindle formation and chromosome segregation via its action on RCC1. This is N-terminal Xaa-Pro-Lys N-methyltransferase 1 (NTMT1) from Homo sapiens (Human).